Consider the following 167-residue polypeptide: ATP synthase subunit b (167 aa).

The chain crosses the membrane as a helical span at residues 9–29; that stretch reads ALPLGNMLFIIIAFLLLMLIL.

The protein belongs to the ATPase B chain family. F-type ATPases have 2 components, F(1) - the catalytic core - and F(0) - the membrane proton channel. F(1) has five subunits: alpha(3), beta(3), gamma(1), delta(1), epsilon(1). F(0) has three main subunits: a(1), b(2) and c(10-14). The alpha and beta chains form an alternating ring which encloses part of the gamma chain. F(1) is attached to F(0) by a central stalk formed by the gamma and epsilon chains, while a peripheral stalk is formed by the delta and b chains.

The protein resides in the cell membrane. In terms of biological role, f(1)F(0) ATP synthase produces ATP from ADP in the presence of a proton or sodium gradient. F-type ATPases consist of two structural domains, F(1) containing the extramembraneous catalytic core and F(0) containing the membrane proton channel, linked together by a central stalk and a peripheral stalk. During catalysis, ATP synthesis in the catalytic domain of F(1) is coupled via a rotary mechanism of the central stalk subunits to proton translocation. Functionally, component of the F(0) channel, it forms part of the peripheral stalk, linking F(1) to F(0). The polypeptide is ATP synthase subunit b (Leuconostoc mesenteroides subsp. mesenteroides (strain ATCC 8293 / DSM 20343 / BCRC 11652 / CCM 1803 / JCM 6124 / NCDO 523 / NBRC 100496 / NCIMB 8023 / NCTC 12954 / NRRL B-1118 / 37Y)).